Consider the following 154-residue polypeptide: Phosphopantetheine adenylyltransferase (154 aa).

Belongs to the eukaryotic CoaD family.

It is found in the cytoplasm. The catalysed reaction is (R)-4'-phosphopantetheine + ATP + H(+) = 3'-dephospho-CoA + diphosphate. It functions in the pathway cofactor biosynthesis; coenzyme A biosynthesis. Its function is as follows. Reversibly transfers an adenylyl group from ATP to 4'-phosphopantetheine, yielding dephospho-CoA (dPCoA) and pyrophosphate. The polypeptide is Phosphopantetheine adenylyltransferase (Methanosarcina mazei (strain ATCC BAA-159 / DSM 3647 / Goe1 / Go1 / JCM 11833 / OCM 88) (Methanosarcina frisia)).